The primary structure comprises 265 residues: 4-hydroxy-tetrahydrodipicolinate reductase (265 aa).

NAD(+) is bound by residues 7–12 (GASGRM), Asp33, 96–98 (GTT), and 120–123 (AANM). The Proton donor/acceptor role is filled by His153. A (S)-2,3,4,5-tetrahydrodipicolinate-binding site is contributed by His154. Catalysis depends on Lys157, which acts as the Proton donor. Position 163-164 (163-164 (GT)) interacts with (S)-2,3,4,5-tetrahydrodipicolinate.

Belongs to the DapB family.

Its subcellular location is the cytoplasm. The enzyme catalyses (S)-2,3,4,5-tetrahydrodipicolinate + NAD(+) + H2O = (2S,4S)-4-hydroxy-2,3,4,5-tetrahydrodipicolinate + NADH + H(+). The catalysed reaction is (S)-2,3,4,5-tetrahydrodipicolinate + NADP(+) + H2O = (2S,4S)-4-hydroxy-2,3,4,5-tetrahydrodipicolinate + NADPH + H(+). The protein operates within amino-acid biosynthesis; L-lysine biosynthesis via DAP pathway; (S)-tetrahydrodipicolinate from L-aspartate: step 4/4. Its function is as follows. Catalyzes the conversion of 4-hydroxy-tetrahydrodipicolinate (HTPA) to tetrahydrodipicolinate. In Cupriavidus metallidurans (strain ATCC 43123 / DSM 2839 / NBRC 102507 / CH34) (Ralstonia metallidurans), this protein is 4-hydroxy-tetrahydrodipicolinate reductase.